A 600-amino-acid polypeptide reads, in one-letter code: Aspartate--tRNA(Asp/Asn) ligase (600 aa).

Glu-174 is an L-aspartate binding site. An aspartate region spans residues 198-201 (QLFK). Arg-220 is a binding site for L-aspartate. Residues 220 to 222 (RDE) and Gln-229 contribute to the ATP site. His-457 contributes to the L-aspartate binding site. Glu-491 provides a ligand contact to ATP. L-aspartate is bound at residue Arg-498. Residue 543 to 546 (GLDR) coordinates ATP.

Belongs to the class-II aminoacyl-tRNA synthetase family. Type 1 subfamily. Homodimer.

The protein localises to the cytoplasm. The enzyme catalyses tRNA(Asx) + L-aspartate + ATP = L-aspartyl-tRNA(Asx) + AMP + diphosphate. Its function is as follows. Aspartyl-tRNA synthetase with relaxed tRNA specificity since it is able to aspartylate not only its cognate tRNA(Asp) but also tRNA(Asn). Reaction proceeds in two steps: L-aspartate is first activated by ATP to form Asp-AMP and then transferred to the acceptor end of tRNA(Asp/Asn). The protein is Aspartate--tRNA(Asp/Asn) ligase of Burkholderia pseudomallei (strain 668).